Reading from the N-terminus, the 820-residue chain is Trimethylamine-N-oxide reductase (820 aa).

Positions 1–33 (MAITRRSFLKGVATTSAASIIGPSLLTSVSAQA) form a signal peptide, tat-type signal. A Mo-bis(molybdopterin guanine dinucleotide)-binding site is contributed by Ser179.

Belongs to the prokaryotic molybdopterin-containing oxidoreductase family. Mo-bis(molybdopterin guanine dinucleotide) is required as a cofactor. In terms of processing, predicted to be exported by the Tat system. The position of the signal peptide cleavage has not been experimentally proven.

The protein resides in the periplasm. It catalyses the reaction trimethylamine + 2 Fe(III)-[cytochrome c] + H2O = trimethylamine N-oxide + 2 Fe(II)-[cytochrome c] + 3 H(+). Its function is as follows. Reduces trimethylamine-N-oxide (TMAO) into trimethylamine; an anaerobic reaction coupled to energy-yielding reactions. This is Trimethylamine-N-oxide reductase (torA) from Vibrio cholerae serotype O1 (strain ATCC 39315 / El Tor Inaba N16961).